A 211-amino-acid polypeptide reads, in one-letter code: Probable nicotinate-nucleotide adenylyltransferase (211 aa).

This sequence belongs to the NadD family.

The catalysed reaction is nicotinate beta-D-ribonucleotide + ATP + H(+) = deamido-NAD(+) + diphosphate. The protein operates within cofactor biosynthesis; NAD(+) biosynthesis; deamido-NAD(+) from nicotinate D-ribonucleotide: step 1/1. Its function is as follows. Catalyzes the reversible adenylation of nicotinate mononucleotide (NaMN) to nicotinic acid adenine dinucleotide (NaAD). In Shewanella sediminis (strain HAW-EB3), this protein is Probable nicotinate-nucleotide adenylyltransferase.